The following is a 232-amino-acid chain: Phosphatidylserine decarboxylase proenzyme (232 aa).

S190 serves as the catalytic Schiff-base intermediate with substrate; via pyruvic acid. S190 is subject to Pyruvic acid (Ser); by autocatalysis.

The protein belongs to the phosphatidylserine decarboxylase family. PSD-A subfamily. As to quaternary structure, heterodimer of a large membrane-associated beta subunit and a small pyruvoyl-containing alpha subunit. It depends on pyruvate as a cofactor. Is synthesized initially as an inactive proenzyme. Formation of the active enzyme involves a self-maturation process in which the active site pyruvoyl group is generated from an internal serine residue via an autocatalytic post-translational modification. Two non-identical subunits are generated from the proenzyme in this reaction, and the pyruvate is formed at the N-terminus of the alpha chain, which is derived from the carboxyl end of the proenzyme. The post-translation cleavage follows an unusual pathway, termed non-hydrolytic serinolysis, in which the side chain hydroxyl group of the serine supplies its oxygen atom to form the C-terminus of the beta chain, while the remainder of the serine residue undergoes an oxidative deamination to produce ammonia and the pyruvoyl prosthetic group on the alpha chain.

It is found in the cell membrane. The catalysed reaction is a 1,2-diacyl-sn-glycero-3-phospho-L-serine + H(+) = a 1,2-diacyl-sn-glycero-3-phosphoethanolamine + CO2. It functions in the pathway phospholipid metabolism; phosphatidylethanolamine biosynthesis; phosphatidylethanolamine from CDP-diacylglycerol: step 2/2. In terms of biological role, catalyzes the formation of phosphatidylethanolamine (PtdEtn) from phosphatidylserine (PtdSer). The sequence is that of Phosphatidylserine decarboxylase proenzyme from Rhodopseudomonas palustris (strain BisB5).